The chain runs to 442 residues: F-box/FBD/LRR-repeat protein At2g26030 (442 aa).

An F-box domain is found at C3–K49. 6 LRR repeats span residues C128–D160, W162–R187, P188–F214, Y234–S260, K278–S309, and Q324–F352. Positions P358–L410 constitute an FBD domain.

The chain is F-box/FBD/LRR-repeat protein At2g26030 from Arabidopsis thaliana (Mouse-ear cress).